The primary structure comprises 449 residues: Chromosomal replication initiator protein DnaA (449 aa).

A domain I, interacts with DnaA modulators region spans residues 1-73 (MTQNPQWLWQ…TETIAELLQQ (73 aa)). The domain II stretch occupies residues 73–109 (QPVKVRLTSPEGNTLAATQSFYSSRSGQSTRPGKKTP). Residues 90-103 (TQSFYSSRSGQSTR) show a composition bias toward polar residues. The disordered stretch occupies residues 90–110 (TQSFYSSRSGQSTRPGKKTPE). Residues 110 to 326 (ELNSKYTFSR…GALLRAVTHI (217 aa)) are domain III, AAA+ region. ATP-binding residues include G154, G156, K157, and T158. Residues 327–449 (AISGLPMTVE…DRINHHHQNL (123 aa)) form a domain IV, binds dsDNA region.

Belongs to the DnaA family. Oligomerizes as a right-handed, spiral filament on DNA at oriC.

It localises to the cytoplasm. Plays an essential role in the initiation and regulation of chromosomal replication. ATP-DnaA binds to the origin of replication (oriC) to initiate formation of the DNA replication initiation complex once per cell cycle. Binds the DnaA box (a 9 base pair repeat at the origin) and separates the double-stranded (ds)DNA. Forms a right-handed helical filament on oriC DNA; dsDNA binds to the exterior of the filament while single-stranded (ss)DNA is stabiized in the filament's interior. The ATP-DnaA-oriC complex binds and stabilizes one strand of the AT-rich DNA unwinding element (DUE), permitting loading of DNA polymerase. After initiation quickly degrades to an ADP-DnaA complex that is not apt for DNA replication. Binds acidic phospholipids. The sequence is that of Chromosomal replication initiator protein DnaA from Picosynechococcus sp. (strain ATCC 27264 / PCC 7002 / PR-6) (Agmenellum quadruplicatum).